Here is a 255-residue protein sequence, read N- to C-terminus: Acetylglutamate kinase (255 aa).

Residues 40-41 (GG), Arg62, and Asn153 each bind substrate.

Belongs to the acetylglutamate kinase family. ArgB subfamily.

It is found in the cytoplasm. The catalysed reaction is N-acetyl-L-glutamate + ATP = N-acetyl-L-glutamyl 5-phosphate + ADP. It functions in the pathway amino-acid biosynthesis; L-arginine biosynthesis; N(2)-acetyl-L-ornithine from L-glutamate: step 2/4. Catalyzes the ATP-dependent phosphorylation of N-acetyl-L-glutamate. This chain is Acetylglutamate kinase, found in Bacillus cereus (strain AH820).